A 372-amino-acid polypeptide reads, in one-letter code: DNA replication and repair protein RecF (372 aa).

30-37 (GENAQGKT) is an ATP binding site.

Belongs to the RecF family.

The protein localises to the cytoplasm. The RecF protein is involved in DNA metabolism; it is required for DNA replication and normal SOS inducibility. RecF binds preferentially to single-stranded, linear DNA. It also seems to bind ATP. In Shouchella clausii (strain KSM-K16) (Alkalihalobacillus clausii), this protein is DNA replication and repair protein RecF.